The following is a 288-amino-acid chain: Serine/threonine-protein acetyltransferase YopJ (288 aa).

Catalysis depends on residues His-109 and Glu-128. His-109 is a CoA binding site. 167-168 (RS) contributes to the CoA binding site. The active site involves Cys-172. Residues 182 to 185 (KLYI) and 224 to 225 (KH) contribute to the 1D-myo-inositol hexakisphosphate site. 227–230 (QGKK) provides a ligand contact to CoA. Arg-257 contacts 1D-myo-inositol hexakisphosphate. 266 to 270 (DGKEL) is a CoA binding site.

It belongs to the acetyltransferase YopJ family. 1D-myo-inositol hexakisphosphate is required as a cofactor.

The protein localises to the secreted. It carries out the reaction L-threonyl-[protein] + acetyl-CoA = O-acetyl-L-threonyl-[protein] + CoA. The catalysed reaction is L-seryl-[protein] + acetyl-CoA = O-acetyl-L-seryl-[protein] + CoA. With respect to regulation, 1D-myo-inositol hexakisphosphate activates protein-acetyltransferase activity via an allosteric mechanism: 1D-myo-inositol hexakisphosphate-binding induces a conformational rearrangement that stimulates the interaction with acetyl-CoA. Its function is as follows. Serine/threonine-protein acetyltransferase translocated into infected cells, which inhibits the host immune response and induces cell death by mediating acetylation of target proteins. Inhibits the MAPK and NF-kappa-B signaling pathways by acetylating protein-kinases such as MAP2K1, MAP2K6, MAP3K7/TAK1 and I-kappa-B kinase (CHUK/IKKA and IKBKB) on serine and threonine residues critical for their activation by phosphorylation, thereby preventing protein-kinase activation. Promotes pyroptosis, a programmed cell death, in host cells by mediating acetylation of MAP3K7/TAK1: MAP3K7/TAK1 inactivation triggers activation of caspase-8 (CASP8), followed by CASP8-dependent cleavage of gasdermin-D (GSDMD) and induction of pyroptosis. Also able to induce intestinal barrier dysfunction by acetylating and inhibiting host protein-kinases RIPK2/RICK and MAP3K7/TAK1, thereby promoting cell death. This is Serine/threonine-protein acetyltransferase YopJ from Yersinia pseudotuberculosis serotype I (strain IP32953).